The chain runs to 399 residues: Succinate--CoA ligase [ADP-forming] subunit beta (399 aa).

Positions 9 to 254 constitute an ATP-grasp domain; the sequence is KAVLKSFGAP…TTEEDEKEIE (246 aa). ATP contacts are provided by residues Lys46, 53-55, Glu109, Ala112, and Glu117; that span reads GRG. Mg(2+) is bound by residues Asn209 and Asp223. Residues Asn274 and 331 to 333 each bind substrate; that span reads GIM.

It belongs to the succinate/malate CoA ligase beta subunit family. Heterotetramer of two alpha and two beta subunits. Requires Mg(2+) as cofactor.

It carries out the reaction succinate + ATP + CoA = succinyl-CoA + ADP + phosphate. The catalysed reaction is GTP + succinate + CoA = succinyl-CoA + GDP + phosphate. Its pathway is carbohydrate metabolism; tricarboxylic acid cycle; succinate from succinyl-CoA (ligase route): step 1/1. Succinyl-CoA synthetase functions in the citric acid cycle (TCA), coupling the hydrolysis of succinyl-CoA to the synthesis of either ATP or GTP and thus represents the only step of substrate-level phosphorylation in the TCA. The beta subunit provides nucleotide specificity of the enzyme and binds the substrate succinate, while the binding sites for coenzyme A and phosphate are found in the alpha subunit. This is Succinate--CoA ligase [ADP-forming] subunit beta from Maricaulis maris (strain MCS10) (Caulobacter maris).